The sequence spans 158 residues: Pycsar effector protein SaPycTM (158 aa).

The next 3 helical transmembrane spans lie at 20-40 (FADA…NFNF), 53-73 (IFNF…AFAV), and 136-156 (VFII…FQII).

It localises to the cell membrane. Pycsar (pyrimidine cyclase system for antiphage resistance) provides immunity against bacteriophage. The pyrimidine cyclase (PycC) synthesizes cyclic nucleotides in response to infection; these serve as specific second messenger signals. The signals activate the adjacent effector, leading to bacterial cell death and abortive phage infection. A clade E Pycsar system. Functionally, the effector gene of a two-gene Pycsar system. Expression of this and adjacent SaPycC cytidylate cyclase (AC P0DV38) probably confers resistance to bacteriophage. The genes are probably only expressed in response to bacteriophage infection. Probably only responds to cCMP (produced by its cognate NTP cyclase), acts by impairing membrane integrity. This is Pycsar effector protein SaPycTM from Staphylococcus aureus.